The primary structure comprises 82 residues: Acyl carrier protein (82 aa).

Positions 4 to 79 (EKIFQELKNI…DVVDIIESNL (76 aa)) constitute a Carrier domain. Residue Ser39 is modified to O-(pantetheine 4'-phosphoryl)serine.

The protein belongs to the acyl carrier protein (ACP) family. Post-translationally, 4'-phosphopantetheine is transferred from CoA to a specific serine of apo-ACP by AcpS. This modification is essential for activity because fatty acids are bound in thioester linkage to the sulfhydryl of the prosthetic group.

It localises to the cytoplasm. Its pathway is lipid metabolism; fatty acid biosynthesis. Functionally, carrier of the growing fatty acid chain in fatty acid biosynthesis. The sequence is that of Acyl carrier protein from Coprothermobacter proteolyticus (strain ATCC 35245 / DSM 5265 / OCM 4 / BT).